Here is a 179-residue protein sequence, read N- to C-terminus: MYLTIKSIMLLWKYLLVTESQVSKCGFHIVKKKGDVLYPKRTKYSKYRKGRCSRGCKPDGTKLGFGRYGIKSCKAGRLSYRAIEAARRAIIGHFHRAMSGQFRRNGKIWVRVFADLPITGKPTEVRMGRGKGNPTGWIARVSTGQILFEMDGVSLANARQAATLAAHKLCLSTKFVQWS.

Belongs to the universal ribosomal protein uL16 family. In terms of assembly, component of the mitochondrial ribosome large subunit.

It is found in the mitochondrion. This Arabidopsis thaliana (Mouse-ear cress) protein is Large ribosomal subunit protein uL16m (RPL16).